A 376-amino-acid polypeptide reads, in one-letter code: uncharacterized protein (376 aa).

The N-terminal stretch at 1 to 22 (MVATGRIIITLLAAALDEIILA) is a signal peptide.

The protein belongs to the ascovirus HvAV ORF17 family.

This is an uncharacterized protein from Heliothis virescens ascovirus 3e (HvAV-3e).